The chain runs to 320 residues: Aspartate carbamoyltransferase catalytic subunit (320 aa).

Residues R68 and T69 each contribute to the carbamoyl phosphate site. K96 is an L-aspartate binding site. Carbamoyl phosphate-binding residues include R118, H148, and Q151. Residues R181 and R236 each contribute to the L-aspartate site. Residues G277 and P278 each contribute to the carbamoyl phosphate site.

It belongs to the aspartate/ornithine carbamoyltransferase superfamily. ATCase family. As to quaternary structure, heterododecamer (2C3:3R2) of six catalytic PyrB chains organized as two trimers (C3), and six regulatory PyrI chains organized as three dimers (R2).

It carries out the reaction carbamoyl phosphate + L-aspartate = N-carbamoyl-L-aspartate + phosphate + H(+). The protein operates within pyrimidine metabolism; UMP biosynthesis via de novo pathway; (S)-dihydroorotate from bicarbonate: step 2/3. In terms of biological role, catalyzes the condensation of carbamoyl phosphate and aspartate to form carbamoyl aspartate and inorganic phosphate, the committed step in the de novo pyrimidine nucleotide biosynthesis pathway. The sequence is that of Aspartate carbamoyltransferase catalytic subunit from Polaromonas naphthalenivorans (strain CJ2).